Consider the following 321-residue polypeptide: Lipoyl synthase (321 aa).

[4Fe-4S] cluster contacts are provided by Cys-68, Cys-73, Cys-79, Cys-94, Cys-98, Cys-101, and Ser-308. The Radical SAM core domain occupies 80 to 297; sequence FNHGTATFMI…KALADELGFT (218 aa).

This sequence belongs to the radical SAM superfamily. Lipoyl synthase family. The cofactor is [4Fe-4S] cluster.

The protein localises to the cytoplasm. The catalysed reaction is [[Fe-S] cluster scaffold protein carrying a second [4Fe-4S](2+) cluster] + N(6)-octanoyl-L-lysyl-[protein] + 2 oxidized [2Fe-2S]-[ferredoxin] + 2 S-adenosyl-L-methionine + 4 H(+) = [[Fe-S] cluster scaffold protein] + N(6)-[(R)-dihydrolipoyl]-L-lysyl-[protein] + 4 Fe(3+) + 2 hydrogen sulfide + 2 5'-deoxyadenosine + 2 L-methionine + 2 reduced [2Fe-2S]-[ferredoxin]. Its pathway is protein modification; protein lipoylation via endogenous pathway; protein N(6)-(lipoyl)lysine from octanoyl-[acyl-carrier-protein]: step 2/2. In terms of biological role, catalyzes the radical-mediated insertion of two sulfur atoms into the C-6 and C-8 positions of the octanoyl moiety bound to the lipoyl domains of lipoate-dependent enzymes, thereby converting the octanoylated domains into lipoylated derivatives. This chain is Lipoyl synthase, found in Shewanella baltica (strain OS185).